A 412-amino-acid polypeptide reads, in one-letter code: UPF0754 membrane protein MAE_37850 (412 aa).

Transmembrane regions (helical) follow at residues 3 to 23 (LPTLWTWILPPIAGAIIGYFT) and 387 to 407 (IVNLGGILGLLVGLMQTIILI).

Belongs to the UPF0754 family.

Its subcellular location is the cell inner membrane. This is UPF0754 membrane protein MAE_37850 from Microcystis aeruginosa (strain NIES-843 / IAM M-2473).